The chain runs to 181 residues: Oligoribonuclease (181 aa).

One can recognise an Exonuclease domain in the interval 8–171 (LIWIDLEMTG…DDIRESVAEL (164 aa)). Tyrosine 129 is a catalytic residue.

It belongs to the oligoribonuclease family.

The protein resides in the cytoplasm. Functionally, 3'-to-5' exoribonuclease specific for small oligoribonucleotides. The protein is Oligoribonuclease of Enterobacter sp. (strain 638).